An 89-amino-acid chain; its full sequence is MAHKKAGGSSRNGRDSAGRRLGVKKFGGELVIGGNIIIRQRGTKVYPGRNVGIGKDHTLFALTDGRVAFHSGKLGRKYVSVDTLAEAAE.

The disordered stretch occupies residues 1 to 20 (MAHKKAGGSSRNGRDSAGRR).

It belongs to the bacterial ribosomal protein bL27 family.

This Rhizorhabdus wittichii (strain DSM 6014 / CCUG 31198 / JCM 15750 / NBRC 105917 / EY 4224 / RW1) (Sphingomonas wittichii) protein is Large ribosomal subunit protein bL27.